A 133-amino-acid chain; its full sequence is Small ribosomal subunit protein uS8 (133 aa).

It belongs to the universal ribosomal protein uS8 family. Part of the 30S ribosomal subunit. Contacts proteins S5 and S12.

Its function is as follows. One of the primary rRNA binding proteins, it binds directly to 16S rRNA central domain where it helps coordinate assembly of the platform of the 30S subunit. The polypeptide is Small ribosomal subunit protein uS8 (Trichodesmium erythraeum (strain IMS101)).